A 166-amino-acid polypeptide reads, in one-letter code: 2-C-methyl-D-erythritol 2,4-cyclodiphosphate synthase (166 aa).

2 residues coordinate a divalent metal cation: Asp-11 and His-13. 4-CDP-2-C-methyl-D-erythritol 2-phosphate contacts are provided by residues 11-13 (DVH) and 40-41 (HS). His-48 lines the a divalent metal cation pocket. 4-CDP-2-C-methyl-D-erythritol 2-phosphate contacts are provided by residues 62 to 64 (DLG), 135 to 138 (TTSD), Phe-142, and Arg-145.

It belongs to the IspF family. As to quaternary structure, homotrimer. A divalent metal cation is required as a cofactor.

It catalyses the reaction 4-CDP-2-C-methyl-D-erythritol 2-phosphate = 2-C-methyl-D-erythritol 2,4-cyclic diphosphate + CMP. It functions in the pathway isoprenoid biosynthesis; isopentenyl diphosphate biosynthesis via DXP pathway; isopentenyl diphosphate from 1-deoxy-D-xylulose 5-phosphate: step 4/6. Functionally, involved in the biosynthesis of isopentenyl diphosphate (IPP) and dimethylallyl diphosphate (DMAPP), two major building blocks of isoprenoid compounds. Catalyzes the conversion of 4-diphosphocytidyl-2-C-methyl-D-erythritol 2-phosphate (CDP-ME2P) to 2-C-methyl-D-erythritol 2,4-cyclodiphosphate (ME-CPP) with a corresponding release of cytidine 5-monophosphate (CMP). The protein is 2-C-methyl-D-erythritol 2,4-cyclodiphosphate synthase of Pseudarthrobacter chlorophenolicus (strain ATCC 700700 / DSM 12829 / CIP 107037 / JCM 12360 / KCTC 9906 / NCIMB 13794 / A6) (Arthrobacter chlorophenolicus).